The sequence spans 510 residues: Arginine biosynthesis bifunctional protein ArgJ, chloroplastic (510 aa).

5 residues coordinate substrate: T223, K249, E359, N505, and T510.

Belongs to the ArgJ family. In terms of assembly, heterodimer of an alpha and a beta chain.

The protein localises to the plastid. It is found in the chloroplast. It catalyses the reaction N(2)-acetyl-L-ornithine + L-glutamate = N-acetyl-L-glutamate + L-ornithine. The enzyme catalyses L-glutamate + acetyl-CoA = N-acetyl-L-glutamate + CoA + H(+). The protein operates within amino-acid biosynthesis; L-arginine biosynthesis; L-ornithine and N-acetyl-L-glutamate from L-glutamate and N(2)-acetyl-L-ornithine (cyclic): step 1/1. It participates in amino-acid biosynthesis; L-arginine biosynthesis; N(2)-acetyl-L-ornithine from L-glutamate: step 1/4. Functionally, catalyzes two activities which are involved in the cyclic version of arginine biosynthesis: the synthesis of acetylglutamate from glutamate and acetyl-CoA, and of ornithine by transacetylation between acetylornithine and glutamate. This Vitis vinifera (Grape) protein is Arginine biosynthesis bifunctional protein ArgJ, chloroplastic.